The primary structure comprises 492 residues: 56 kDa U1 small nuclear ribonucleoprotein component (492 aa).

Positions 1-15 are enriched in basic residues; the sequence is MRPRRRGLAYHHTKP. Disordered stretches follow at residues 1 to 35 and 300 to 371; these read MRPR…QRRK and DQFP…NKPG. Residues 18–30 show a composition bias toward polar residues; it reads QLSQGHYPTTSND. Over residues 310–321 the composition is skewed to low complexity; it reads SNSPSSNSISSS. Positions 329–353 are enriched in polar residues; it reads TSYQTQPQRHAVNKPSNVLNSSNRH.

Component of the 18S U1 snRNP particle, a subcomplex of the spliceosome. Interacts with the nuclear cap-binding complex CBC1-CBC2 (yCBC). Directly contacts intronic sequences of substrate pre-RNA.

Its subcellular location is the nucleus. Functionally, component of the U1 snRNP particle, which recognizes and binds the 5'-splice site of pre-mRNA. Together with other non-snRNP factors, U1 snRNP forms the spliceosomal commitment complex, that targets pre-mRNA to the splicing pathway. This is 56 kDa U1 small nuclear ribonucleoprotein component (SNU56) from Saccharomyces cerevisiae (strain ATCC 204508 / S288c) (Baker's yeast).